Reading from the N-terminus, the 215-residue chain is ATP phosphoribosyltransferase (215 aa).

It belongs to the ATP phosphoribosyltransferase family. Short subfamily. Heteromultimer composed of HisG and HisZ subunits.

It localises to the cytoplasm. It catalyses the reaction 1-(5-phospho-beta-D-ribosyl)-ATP + diphosphate = 5-phospho-alpha-D-ribose 1-diphosphate + ATP. It functions in the pathway amino-acid biosynthesis; L-histidine biosynthesis; L-histidine from 5-phospho-alpha-D-ribose 1-diphosphate: step 1/9. Functionally, catalyzes the condensation of ATP and 5-phosphoribose 1-diphosphate to form N'-(5'-phosphoribosyl)-ATP (PR-ATP). Has a crucial role in the pathway because the rate of histidine biosynthesis seems to be controlled primarily by regulation of HisG enzymatic activity. This Acidithiobacillus ferrooxidans (strain ATCC 23270 / DSM 14882 / CIP 104768 / NCIMB 8455) (Ferrobacillus ferrooxidans (strain ATCC 23270)) protein is ATP phosphoribosyltransferase.